The following is a 147-amino-acid chain: Acidic phospholipase A2 S9-53F (147 aa).

The N-terminal stretch at 1 to 19 (MYPAHLLVLLAVCVSLLGA) is a signal peptide. Positions 20–27 (SDIPPQPL) are excised as a propeptide. 7 disulfide bridges follow: Cys38–Cys99, Cys54–Cys146, Cys56–Cys72, Cys71–Cys127, Cys78–Cys120, Cys88–Cys113, and Cys106–Cys118. Positions 55, 57, and 59 each coordinate Ca(2+). His75 is a catalytic residue. Asp76 contacts Ca(2+). The active site involves Asp121.

The protein belongs to the phospholipase A2 family. Group I subfamily. D49 sub-subfamily. It depends on Ca(2+) as a cofactor. Expressed by the venom gland.

It localises to the secreted. The catalysed reaction is a 1,2-diacyl-sn-glycero-3-phosphocholine + H2O = a 1-acyl-sn-glycero-3-phosphocholine + a fatty acid + H(+). In terms of biological role, snake venom phospholipase A2 (PLA2) that inhibits collagen-induced platelet aggregation. PLA2 catalyzes the calcium-dependent hydrolysis of the 2-acyl groups in 3-sn-phosphoglycerides. The sequence is that of Acidic phospholipase A2 S9-53F from Austrelaps superbus (Lowland copperhead snake).